Reading from the N-terminus, the 432-residue chain is Transcriptional adapter 3 (432 aa).

A Glycyl lysine isopeptide (Lys-Gly) (interchain with G-Cter in SUMO2) cross-link involves residue Lys21. A coiled-coil region spans residues 40–69 (IEELDTLQLELETLLSSASRRLRVLEAETQ). The interval 87 to 127 (GRDHELGAPPKHGKPKKQKLEGKTGHGPGPGPGRPKSKNVQ) is disordered. Lys129 participates in a covalent cross-link: Glycyl lysine isopeptide (Lys-Gly) (interchain with G-Cter in SUMO2). The disordered stretch occupies residues 272–319 (NIISPMEDSPIPDMSGKESGADGASTSPRNQNKPFSVPHTKSLESRIK). Phosphoserine occurs at positions 280 and 298. Over residues 295-305 (ASTSPRNQNKP) the composition is skewed to polar residues. A coiled-coil region spans residues 367 to 407 (LLRLAKEEVSRQELRQRVRMADNEVMDAFRKIMAARQKKRT). At Lys418 the chain carries N6-acetyllysine.

This sequence belongs to the NGG1 family. In terms of assembly, the PCAF complex is composed of a number of TBP-associated factors (TAFS), such as TAF5, TAF5L, TAF6, TAF6L, TAF9, TAF10 and TAF12, PCAF, and also PCAF-associated factors (PAFs), such as TADA2L/ADA2, TADA3L/ADA3 and SPT3. Interacts directly with TADA2L and PCAF and also with the high-risk HPV oncoprotein E6. Component of the STAGA transcription coactivator-HAT complex, at least composed of SUPT3H, GCN5L2, TAF5L, TAF6L, SUPT7L, TADA3L, TAD1L, TAF10, TAF12, TRRAP and TAF9. Component of the TFTC-HAT complex. Component of the ADA2A-containing complex (ATAC), composed of KAT14, KAT2A, TADA2L, TADA3L, ZZ3, MBIP, WDR5, YEATS2, CCDC101 and DR1.

Its subcellular location is the nucleus. Its function is as follows. Functions as a component of the PCAF complex. The PCAF complex is capable of efficiently acetylating histones in a nucleosomal context. The PCAF complex could be considered as the human version of the yeast SAGA complex. Also known as a coactivator for p53/TP53-dependent transcriptional activation. Component of the ATAC complex, a complex with histone acetyltransferase activity on histones H3 and H4. The chain is Transcriptional adapter 3 (Tada3) from Mus musculus (Mouse).